A 35-amino-acid chain; its full sequence is Cupiennin-2a (35 aa).

Lys35 carries the post-translational modification Lysine amide.

In terms of tissue distribution, expressed by the venom gland.

The protein resides in the secreted. This is Cupiennin-2a from Cupiennius salei (American wandering spider).